The sequence spans 263 residues: Probable septum site-determining protein MinC (263 aa).

Positions 107 to 159 (LPPSGARERPLDIKDSAPRKPAEEPSPSAGEARPEPAKAEEKPAEPVSRPTKV) are disordered. 2 stretches are compositionally biased toward basic and acidic residues: residues 112–129 (ARERPLDIKDSAPRKPAE) and 138–150 (ARPEPAKAEEKPA).

This sequence belongs to the MinC family. Interacts with MinD and FtsZ.

Cell division inhibitor that blocks the formation of polar Z ring septums. Rapidly oscillates between the poles of the cell to destabilize FtsZ filaments that have formed before they mature into polar Z rings. Prevents FtsZ polymerization. The sequence is that of Probable septum site-determining protein MinC from Pseudomonas aeruginosa (strain LESB58).